Here is a 153-residue protein sequence, read N- to C-terminus: 6,7-dimethyl-8-ribityllumazine synthase (153 aa).

Residues Phe22, Ala56 to Glu58, and Ala80 to Ile82 contribute to the 5-amino-6-(D-ribitylamino)uracil site. Ser85–Thr86 is a (2S)-2-hydroxy-3-oxobutyl phosphate binding site. His88 functions as the Proton donor in the catalytic mechanism. Phe113 provides a ligand contact to 5-amino-6-(D-ribitylamino)uracil. Arg127 lines the (2S)-2-hydroxy-3-oxobutyl phosphate pocket.

Belongs to the DMRL synthase family.

The catalysed reaction is (2S)-2-hydroxy-3-oxobutyl phosphate + 5-amino-6-(D-ribitylamino)uracil = 6,7-dimethyl-8-(1-D-ribityl)lumazine + phosphate + 2 H2O + H(+). The protein operates within cofactor biosynthesis; riboflavin biosynthesis; riboflavin from 2-hydroxy-3-oxobutyl phosphate and 5-amino-6-(D-ribitylamino)uracil: step 1/2. Its function is as follows. Catalyzes the formation of 6,7-dimethyl-8-ribityllumazine by condensation of 5-amino-6-(D-ribitylamino)uracil with 3,4-dihydroxy-2-butanone 4-phosphate. This is the penultimate step in the biosynthesis of riboflavin. This chain is 6,7-dimethyl-8-ribityllumazine synthase, found in Clostridium novyi (strain NT).